The sequence spans 2476 residues: Zonadhesin (2476 aa).

A signal peptide spans 1–29; that stretch reads MLGLPALAGPMAMPHPPLIPSTPTLLAFS. At 30–2418 the chain is on the extracellular side; sequence FPGGFYMLLD…SPKKPEASNR (2389 aa). MAM domains are found at residues 31–144 and 147–312; these read PGGF…PCEE and PQCD…TCRG. 2 N-linked (GlcNAc...) asparagine glycosylation sites follow: Asn-109 and Asn-269. Disordered stretches follow at residues 313-332, 358-462, and 537-632; these read PSET…KPTV, PTVP…TERT, and ERTT…RTTI. The tract at residues 319-687 is 53 X approximate heptapeptide repeats (mucin-like domain); it reads STEKPVAPTE…ATTVTPRTTI (369 aa). The span at 358–373 shows a compositional bias: low complexity; the sequence is PTVPTEKPTIPTEKST. The span at 400-412 shows a compositional bias: pro residues; the sequence is TTPPEGPAVPPKG. The segment covering 423–433 has biased composition (basic and acidic residues); sequence HTEKSTVHTEK. Residues 451-462 show a composition bias toward low complexity; that stretch reads PTKRTTTPTERT. In terms of domain architecture, TIL 1 spans 690-739; that stretch reads CPPNAHFERCACPVSCQSPTPNCELFCKPGCVCDPGFLFSGSHCVNASSC. N-linked (GlcNAc...) asparagine glycans are attached at residues Asn-735, Asn-758, and Asn-833. The VWFC 1 domain occupies 740 to 794; it reads DCFYNDNYYKLGTDWFSPNCTEHCHCRPSSRMECQTFKCGTHTVCQLKNGQYGCH. The region spanning 799-976 is the VWFD 1 domain; sequence ATCSVYGDPH…TSEDADQQCE (178 aa). Cystine bridges form between Cys-801/Cys-936 and Cys-823/Cys-975. The segment at 943–983 is disordered; the sequence is SSNDNQKPDGSPAKDEKELGSSWQTSEDADQQCEENQVSPP. One can recognise a TIL 2 domain in the interval 1070–1123; it reads CPRNSRYTLCARLCPDTCHSEFSGRACKDRCVEGCECDPGFVLSGLQCVSRSEC. Residues 1124-1180 enclose the VWFC 2 domain; sequence GCLDSTAGYVKVGERWFKPGCRQLCICEGNNRTRCVLWRCQAQEFCGQQDGIYGCHA. A glycan (N-linked (GlcNAc...) asparagine) is linked at Asn-1154. Positions 1184–1364 constitute a VWFD 2 domain; that stretch reads ATCTVSGDPH…INELSEPGCF (181 aa). 2 disulfides stabilise this stretch: Cys-1186-Cys-1324 and Cys-1208-Cys-1363. N-linked (GlcNAc...) asparagine glycans are attached at residues Asn-1329 and Asn-1448. The 56-residue stretch at 1456–1511 folds into the TIL 3 domain; the sequence is CPSGSSYSTCANPCPATCLSLNNPSYCPSTLPCAEGCECQKGHILSGTSCVPLSQC. A VWFC 3 domain is found at 1512–1568; the sequence is GCTTQRGSYHPVGESWYTDNSCSRLCTCSAHNNISCRQASCKPSQMCWPQDGLIRCR. N-linked (GlcNAc...) asparagine glycosylation is found at Asn-1544, Asn-1596, and Asn-1654. The 179-residue stretch at 1573 to 1751 folds into the VWFD 3 domain; sequence GVCRIPDTSH…RDKEIDPNCQ (179 aa). 2 disulfides stabilise this stretch: Cys-1575–Cys-1712 and Cys-1597–Cys-1750. Over residues 1747–1759 the composition is skewed to basic and acidic residues; that stretch reads DPNCQEDDRKTEA. A disordered region spans residues 1747-1768; it reads DPNCQEDDRKTEAESQEQPSAN. An N-linked (GlcNAc...) asparagine glycan is attached at Asn-1843. The TIL 4 domain occupies 1851–1907; it reads CSAHSVYTSCVPSCLPSCQDPEGQCTGAGAPSTCEEGCICEPGYVLSEQQCVARSQC. Residues 1908 to 1963 enclose the VWFC 4 domain; it reads GCRDARGTFLPVGRFRLSSGCSQMCVCTAGAIECRPFTCPSGSQCEPNEDGKDFCQ. N-linked (GlcNAc...) asparagine glycosylation is present at Asn-1965. Residues 1968 to 2145 enclose the VWFD 4 domain; the sequence is NLCSVFGDPH…WEVKAKEGHP (178 aa). A disulfide bridge connects residues Cys-1970 and Cys-2107. Asn-2122, Asn-2165, and Asn-2178 each carry an N-linked (GlcNAc...) asparagine glycan. The region spanning 2257 to 2310 is the TIL 5 domain; sequence CPANTVYQSCMTPCPASCATLAVPRACDGPCVEGCASLPGYIYSGAQSLPMAHC. Positions 2311 to 2365 constitute a VWFC 5 domain; it reads GCTNNGVYYQQGDSFVTENCSQRCTCASSGVLLCEPLSCRPGEICTLGNLTRGCF. 2 N-linked (GlcNAc...) asparagine glycosylation sites follow: Asn-2329 and Asn-2359. The 37-residue stretch at 2366-2402 folds into the EGF-like domain; sequence RDSPCLQNPCQNDGRCREQGTHFTCECELGYGGDLCT. Intrachain disulfides connect Cys-2370–Cys-2381, Cys-2375–Cys-2390, and Cys-2392–Cys-2401. A helical membrane pass occupies residues 2419–2439; sequence VAILLGMLMPTVLLVPAVTRV. The tract at residues 2438 to 2476 is disordered; sequence RVSRKRRRRRRPSRERTQSQNRGKRAGTDCAPEQAYKVA. Residues 2439–2450 are compositionally biased toward basic residues; that stretch reads VSRKRRRRRRPS. Over 2440-2476 the chain is Cytoplasmic; the sequence is SRKRRRRRRPSRERTQSQNRGKRAGTDCAPEQAYKVA.

As to quaternary structure, probably forms covalent oligomers. In terms of processing, the MAM domains and the mucin-like domains are missing from the zonadhesin that binds to the egg extracellular matrix. Processing might occur during sperm maturation and/or capacitation. In terms of tissue distribution, in testis, primarily in haploid spermatids. Not in lung, liver, heart, spleen, brain, kidney, epididymis.

It localises to the cell membrane. Binds in a species-specific manner to the zona pellucida of the egg. May be involved in gamete recognition and/or signaling. In Sus scrofa (Pig), this protein is Zonadhesin (ZAN).